Here is an 82-residue protein sequence, read N- to C-terminus: Small, acid-soluble spore protein gamma-type (82 aa).

2 stretches are compositionally biased toward polar residues: residues 1–24 (MANSNNKTNAQQVRKQNQQSASGQ) and 32–50 (ASETNVQQVRKQNQQSAAG). The interval 1–82 (MANSNNKTNA…SAEQNKQQNS (82 aa)) is disordered. 2 repeats span residues 19 to 45 (QSASGQGQFGTEFASETNVQQVRKQNQ) and 46 to 72 (QSAAGQGQFGTEFASETDAQQVRQQNQ). The span at 69 to 82 (QQNQSAEQNKQQNS) shows a compositional bias: low complexity.

Belongs to the gamma-type SASP family.

SASP are bound to spore DNA. They are double-stranded DNA-binding proteins that cause DNA to change to an a-like conformation. They protect the DNA backbone from chemical and enzymatic cleavage and are thus involved in dormant spore's high resistance to UV light. This Bacillus subtilis protein is Small, acid-soluble spore protein gamma-type.